The primary structure comprises 890 residues: Potassium/sodium hyperpolarization-activated cyclic nucleotide-gated channel 1 (890 aa).

The interval 1 to 93 (MEGGGKPNSS…AEGPRRQYGF (93 aa)) is disordered. At 1 to 142 (MEGGGKPNSS…WIIHPYSDFR (142 aa)) the chain is on the cytoplasmic side. A compositionally biased stretch (low complexity) spans 8–34 (NSSSNSRDDGNSVFPAKASATGAGPAA). Residues 62–77 (DGGGGGGGGGGGGEEP) show a composition bias toward gly residues. The chain crosses the membrane as a helical span at residues 143–164 (FYWDLIMLIMMVGNLVIIPVGI). Over 165 to 173 (TFFTEQTTT) the chain is Extracellular. A helical membrane pass occupies residues 174-194 (PWIIFNVASDTVFLLDLIMNF). The Cytoplasmic segment spans residues 195–215 (RTGTVNEDSSEIILDPKVIKM). A helical membrane pass occupies residues 216-236 (NYLKSWFVVDFISSIPVDYIF). The Extracellular portion of the chain corresponds to 237 to 260 (LIVEKGMDSEVYKTARALRIVRFT). The chain crosses the membrane as a helical; Voltage-sensor span at residues 261–281 (KILSLLRLLRLSRLIRYIHQW). At 282–295 (EEIFHMTYDLASAV) the chain is on the cytoplasmic side. The helical transmembrane segment at 296–318 (VRIFNLIGMMLLLCHWDGCLQFL) threads the bilayer. The Extracellular segment spans residues 319-344 (VPLLQDFPPDCWVSLNEMVNDSWGKQ). An N-linked (GlcNAc...) asparagine glycan is attached at N338. The pore-forming intramembrane region spans 345-366 (YSYALFKAMSHMLCIGYGAQAP). Positions 358–362 (CIGYG) match the Selectivity filter motif. Topologically, residues 367–371 (VSMSD) are extracellular. Residues 372–392 (LWITMLSMIVGATCYAMFVGH) traverse the membrane as a helical segment. The Cytoplasmic portion of the chain corresponds to 393 to 890 (ATALIQSLDS…AEKPRFASNL (498 aa)). Positions 539, 540, 542, 549, 550, 590, and 593 each coordinate 3',5'-cyclic AMP. Composition is skewed to low complexity over residues 644–691 (MTTL…PQPS) and 731–749 (QQQP…TQPQ). Disordered stretches follow at residues 644–692 (MTTL…QPSA), 725–796 (SQLS…LPHE), and 845–890 (MSSG…ASNL). Positions 770–780 (STQALHNTNLT) are enriched in polar residues. A compositionally biased stretch (pro residues) spans 854–865 (RGVPPAPPPPAA). Basic and acidic residues predominate over residues 880-890 (DAEKPRFASNL).

Belongs to the potassium channel HCN family. As to quaternary structure, homotetramer. Heterotetramer with HCN2. The potassium channel is composed of a homo- or heterotetrameric complex of pore-forming subunits. Interacts with KCNE2. Interacts with the SH3 domain of CSK. As to expression, detected in brain, in particular in amygdala and hippocampus, while expression in caudate nucleus, corpus callosum, substantia nigra, subthalamic nucleus and thalamus is very low or not detectable. Detected at very low levels in muscle and pancreas.

The protein resides in the cell membrane. The enzyme catalyses Na(+)(in) = Na(+)(out). The catalysed reaction is K(+)(in) = K(+)(out). Its activity is regulated as follows. Activated by cAMP, and at 10-100 times higher concentrations, also by cGMP. cAMP binding promotes tetramerization and formation of an active channel. Compared to other family members, cAMP has less stimulatory effect on HCN1 because part of the molecules already contain bound cAMP and form homotetramers when cAMP levels are low, this inherent tetramerization in HCN1 results in a weaker response to increased cAMP. Inhibited by Cs(1+), zatebradine, capsazepine and ZD7288. Its function is as follows. Hyperpolarization-activated ion channel that are permeable to sodium and potassium ions. Displays lower selectivity for K(+) over Na(+) ions. Contributes to the native pacemaker currents in heart (If) and in the generation of the I(h) current which controls neuron excitability. Participates in cerebellar mechanisms of motor learning. May mediate responses to sour stimuli. The protein is Potassium/sodium hyperpolarization-activated cyclic nucleotide-gated channel 1 (HCN1) of Homo sapiens (Human).